The chain runs to 914 residues: Caprin-2 (914 aa).

7 disordered regions span residues 259 to 283 (PLPK…PSGL), 298 to 326 (EFLN…KEDF), 367 to 411 (KTVD…LPKD), 439 to 480 (DGES…SSQR), 495 to 529 (CLSN…PPLY), 608 to 631 (HRSF…PELN), and 718 to 747 (GAGT…AYPL). Over residues 264–273 (DSQEKTETIK) the composition is skewed to basic and acidic residues. A compositionally biased stretch (polar residues) spans 274–283 (PDSQSRPSGL). Residues 370–392 (DIVKRSTTDPKEKRQRKKAEQDS) are compositionally biased toward basic and acidic residues. The span at 469-480 (KSPSDILPSSQR) shows a compositional bias: polar residues. Residues 508 to 520 (LELHSEDKPRKQA) show a composition bias toward basic and acidic residues. Residues 610–626 (SFTSAKTSSVTTASTQT) are compositionally biased toward low complexity. Polar residues predominate over residues 718-738 (GAGTATQRSSAGWSDSSQVSS). The C1q domain occupies 780–914 (LTQLRVAFSA…TFSGFLLYQD (135 aa)). Ca(2+) contacts are provided by Asp865 and Glu871.

The protein belongs to the caprin family. Homotrimer; via C1q domain.

It is found in the cytoplasm. The protein localises to the cell membrane. Its function is as follows. Promotes phosphorylation of the Wnt coreceptor LRP6, leading to increased activity of the canonical Wnt signaling pathway. Facilitates constitutive LRP6 phosphorylation by CDK14/CCNY during G2/M stage of the cell cycle, which may potentiate cells for Wnt signaling. May regulate the transport and translation of mRNAs, modulating for instance the expression of proteins involved in synaptic plasticity in neurons. Involved in regulation of growth as erythroblasts shift from a highly proliferative state towards their terminal phase of differentiation. May be involved in apoptosis. This chain is Caprin-2, found in Danio rerio (Zebrafish).